A 472-amino-acid chain; its full sequence is Gamma-glutamylputrescine synthetase PuuA (472 aa).

The region spanning 35–129 (PNTQYVDVLL…MLLTMVDEDG (95 aa)) is the GS beta-grasp domain. Positions 136–472 (PRNVLNRLWQ…TEIEWMLKNA (337 aa)) constitute a GS catalytic domain.

The protein belongs to the glutamine synthetase family. As to quaternary structure, dodecamer. It depends on Mg(2+) as a cofactor. Mn(2+) is required as a cofactor.

It catalyses the reaction putrescine + L-glutamate + ATP = gamma-L-glutamylputrescine + ADP + phosphate + H(+). The protein operates within amine and polyamine degradation; putrescine degradation; 4-aminobutanoate from putrescine: step 1/4. Involved in the breakdown of putrescine. Catalyzes the ATP-dependent gamma-glutamylation of putrescine, producing gamma-L-glutamylputrescine. Absolutely essential to utilize putrescine as both nitrogen and carbon sources and to decrease the toxicity of putrescine, which can lead to inhibition of cell growth and protein synthesis. In vitro is also able to use several diamines, and spermidine and spermine, instead of putrescine, but with a much lower activity, and cannot catalyze the gamma-glutamylation of ornithine or GABA. The sequence is that of Gamma-glutamylputrescine synthetase PuuA from Escherichia coli (strain K12).